The following is a 551-amino-acid chain: MAKAFVFSLCLLLVFNGCLAARQSQLSPQNQCQLNQLQAREPDNRIQAEAGQIETWNFNQEDFQCAGVAASRITIQRNGLHLPSYSNAPQLIYIVQGRGVLGAVFSGCPETFEESQQSSQQGRQQEQEQERQQQQQGEQGRQQGQQEQQQERQGRQQGRQQQEEGRQQEQQQGQQGRPQQQQQFRQFDRHQKTRRIREGDVVAIPAGVAYWSYNDGDQELVAVNLFHVSSDHNQLDQNPRKFYLAGNPENEFNQQGQSQPRQQGEQGRPGQHQQPFGRPRQQEQQGSGNNVFSGFNTQLLAQALNVNEETARNLQGQNDNRNQIIRVRGNLDFVQPPRGRQEREHEERQQEQLQQERQQQGGQLMANGLEETFCSLRLKENIGNPERADIFSPRAGRISTLNSHNLPILRFLRLSAERGFFYRNGIYSPHWNVNAHSVVYVIRGNARVQVVNENGDAILDQEVQQGQLFIVPQNHGVIQQAGNQGFEYFAFKTEENAFINTLAGRTSFLRALPDEVLANAYQISREQARQLKYNRQETIALSSSQQRRAVV.

Residues 1-20 (MAKAFVFSLCLLLVFNGCLA) form the signal peptide. 2 disulfide bridges follow: C32/C65 and C108/C374. A Cupin type-1 1 domain is found at 37 to 312 (LQAREPDNRI…ALNVNEETAR (276 aa)). Disordered stretches follow at residues 111–194 (TFEE…QKTR), 238–293 (NPRK…NVFS), and 311–361 (ARNL…QQQG). 3 stretches are compositionally biased toward low complexity: residues 114–124 (ESQQSSQQGRQ), 132–148 (QQQQQGEQGRQQGQQEQ), and 168–185 (QEQQQGQQGRPQQQQQFR). IgE-binding stretches follow at residues 118–132 (SSQQGRQQEQEQERQ), 145–159 (QQEQQQERQGRQQGR), 161–175 (QQEEGRQQEQQQGQQ), and 225–239 (LFHVSSDHNQLDQNP). Low complexity predominate over residues 254–275 (QQGQSQPRQQGEQGRPGQHQQP). Residues 281–295 (QQEQQGSGNNVFSGF) form an igE-binding region. Composition is skewed to polar residues over residues 282–293 (QEQQGSGNNVFS) and 311–323 (ARNLQGQNDNRNQ). Residues 339–350 (GRQEREHEERQQ) are compositionally biased toward basic and acidic residues. The segment covering 351–361 (EQLQQERQQQG) has biased composition (low complexity). Residues 367 to 372 (NGLEET) carry the NGXEET; peptidase recognition motif motif. Residues 380-529 (ENIGNPERAD…AYQISREQAR (150 aa)) form the Cupin type-1 2 domain. The igE-binding stretch occupies residues 510 to 524 (RALPDEVLANAYQIS).

This sequence belongs to the 11S seed storage protein (globulins) family. As to quaternary structure, hexamer of two trimers; each subunit is composed of an acidic and a basic chain derived from a single precursor and linked by a disulfide bond. Proteolytically processed from a single precursor to produce an acidic and a basic chain that are linked by a disulfide bond. Expressed in seed (at protein level).

Functionally, seed storage protein. The chain is Prunin 1 Pru du 6.0101 from Prunus dulcis (Almond).